A 253-amino-acid polypeptide reads, in one-letter code: Triosephosphate isomerase (253 aa).

13–15 lines the substrate pocket; that stretch reads NWK. The Electrophile role is filled by His100. Glu169 functions as the Proton acceptor in the catalytic mechanism. Substrate contacts are provided by residues Gly175, Ser208, and 229–230; that span reads GG.

It belongs to the triosephosphate isomerase family. Homodimer.

The protein resides in the cytoplasm. The catalysed reaction is D-glyceraldehyde 3-phosphate = dihydroxyacetone phosphate. It functions in the pathway carbohydrate biosynthesis; gluconeogenesis. Its pathway is carbohydrate degradation; glycolysis; D-glyceraldehyde 3-phosphate from glycerone phosphate: step 1/1. Involved in the gluconeogenesis. Catalyzes stereospecifically the conversion of dihydroxyacetone phosphate (DHAP) to D-glyceraldehyde-3-phosphate (G3P). In Synechococcus sp. (strain RCC307), this protein is Triosephosphate isomerase.